Reading from the N-terminus, the 297-residue chain is Internalin C (297 aa).

The signal sequence occupies residues 1–34; the sequence is MLKKNNWLQNAVIAMLVLIVGLCINMGSGTKVQA. LRR repeat units lie at residues 74–96, 97–120, 122–139, 140–161, 162–184, and 186–207; these read LSGVQNFNGDNSNIQSLAGMQFF, TNLKELHLSHNQISDLSPLKDLTK, EELSVNRNRLKNLNGIPS, ACLSRLFLDNNELRDTDSLIHL, KNLEILSIRNNKLKSIVMLGFLS, and LEVLDLHGNEITNTGGLTRLKK.

Belongs to the internalin family. In terms of assembly, interacts in vitro with human intestinal mucin-2 (MUC2) but not with mucin-1; binding is slightly better at pH 5.5, (the pH of the intestine) than at pH 7.4. Interacts with the SH3 6 domain of human DNMBP (Tuba). Interacts with I-kappa-B kinase alpha (IKKA, CHUK).

The protein localises to the secreted. Its subcellular location is the host cytoplasm. In terms of biological role, a virulence enhancer that has at least 2 dissociable functions in infection; it impairs translocation of host transcription factor NF-kappa-B to the nucleus and antagonizes the function of the Tuba dynamin-binding protein, promoting bacterial spreading. Perturbs the morphology of host cell junctions by impairing host DNMBP (Tuba) and WASL interaction, altering cortical tension at the cell junctions and allowing bacteria to more efficiently form bacteria-filled cell protrusions which promote bacterial spreading within infected host tissue. Down-regulates the host inflammation response usually induced by Listeria infection. Interacts with host I-kappa-B kinase alpha (IKKA, CHUK), which prevents IKKA from phosphorylating NF-kappa-B inhibitor alpha (IKBA, NFKBIA) and thus delays degradation of phospho-IKBA. Translocation of host transcription factor p65 (a subunit of NF-kappa-B, RELA) into the nucleus is impaired, which prevents activation of NF-KB-regulated genes. Recognized by serum from healthy humans exposed to L.monocytogenes as well from patients who have recovered from listeriosis. In Listeria monocytogenes serotype 1/2a (strain EGD / Mackaness), this protein is Internalin C.